Consider the following 902-residue polypeptide: Chloride channel protein 2 (902 aa).

The Cytoplasmic portion of the chain corresponds to 1–89 (MAASAAAAGE…RCHKFLVSRV (89 aa)). The tract at residues 18-36 (QYEQTLMYGRYTQELGAFA) is essential for channel gating by both voltage and cell volume. T22 bears the Phosphothreonine mark. The segment at 38 to 51 (EEAARIRLGGPEPW) is modulates channel gating by both voltage and cell volume. Transmembrane regions (helical) follow at residues 90–123 (GEDW…AQQW) and 132–157 (ILLQ…TQIL). Positions 163-167 (GSGIP) match the Selectivity filter part_1 motif. Positions 166–173 (IPEMKTIL) form an intramembrane region, helical. The next 2 helical transmembrane spans lie at 182–200 (LTLK…ALGS) and 207–225 (EGPF…SKFL). The Selectivity filter part_2 motif lies at 205-209 (GKEGP). 2 intramembrane regions (helical) span residues 241–253 (MLAA…VGCC) and 257–265 (PIGGVLFSI). A run of 5 helical transmembrane segments spans residues 277–297 (YWRG…LAVW), 323–351 (LPAF…VQVM), 360–379 (FLMR…ISTL), 431–451 (ANVF…SALA), and 459–482 (GAFM…MAAW). Positions 459 to 463 (GAFMP) match the Selectivity filter part_3 motif. Residues 499–513 (GGYAVVGAAALAGAV) constitute an intramembrane region (helical). Positions 514 to 515 (TH) form an intramembrane region, note=Loop between two helices. An intramembrane region (helical) is located at residues 516-527 (TVSTAVIVFELT). Positions 528–532 (GQIAH) form an intramembrane region, note=Loop between two helices. A helical transmembrane segment spans residues 533–550 (ILPVMIAVILANAVAQSL). Topologically, residues 551–902 (QPSLYDSIIR…SPSDSDDKCQ (352 aa)) are cytoplasmic. Residues 586–644 (MVRDVPYVALNCTFRDLRLALHRTKGRMLALVESSESMILLGSIERSQVVTLLGAQLSA) form the CBS 1 domain. The interval 648 to 748 (RQHIQERRKA…TSDLEKPESC (101 aa)) is disordered. Composition is skewed to polar residues over residues 671–683 (PESS…NTED) and 706–719 (SNAS…TGSM). Residues 794 to 854 (IDPAPFQLVE…GSVTAQGVKV (61 aa)) form the CBS 2 domain. A Basolateral membrane sorting motif is present at residues 816-817 (LL). The tract at residues 860-902 (SFRDSATSSSDTETTEVHALWGPHSCHGLPRDGSPSDSDDKCQ) is disordered.

This sequence belongs to the chloride channel (TC 2.A.49) family. ClC-2/CLCN2 subfamily. Homodimer. Interacts with auxiliary subunit HEPACAM.

It is found in the cell membrane. The protein localises to the basolateral cell membrane. It localises to the cell projection. The protein resides in the dendritic spine membrane. Its subcellular location is the axon. It catalyses the reaction chloride(in) = chloride(out). It carries out the reaction thiocyanate(in) = thiocyanate(out). The catalysed reaction is bromide(in) = bromide(out). The enzyme catalyses nitrate(in) = nitrate(out). It catalyses the reaction iodide(out) = iodide(in). Common gate kinetics are down-regulated by intracellular ATP. Inhibited by AK-42, a derivative of meclofenamate. Inhibited by Cd(2+). Inhibited by Zn(2+) and PKC activation. Inhibited at acidic pH. CCLN2:HEPACAM channel conductance is up-regulated upon hypo-osmolarity. Its function is as follows. Voltage-gated and osmosensitive chloride channel. Forms a homodimeric channel where each subunit has its own ion conduction pathway. Conducts double-barreled currents controlled by two types of gates, two fast glutamate gates that control each subunit independently and a slow common gate that opens and shuts off both subunits simultaneously. Displays inward rectification currents activated upon membrane hyperpolarization and extracellular hypotonicity. Contributes to chloride conductance involved in neuron excitability. In hippocampal neurons, generates a significant part of resting membrane conductance and provides an additional chloride efflux pathway to prevent chloride accumulation in dendrites upon GABA receptor activation. In glia, associates with the auxiliary subunit HEPACAM/GlialCAM at astrocytic processes and myelinated fiber tracts where it may regulate transcellular chloride flux buffering extracellular chloride and potassium concentrations. Regulates aldosterone production in adrenal glands. The opening of CLCN2 channels at hyperpolarized membrane potentials in the glomerulosa causes cell membrane depolarization, activation of voltage-gated calcium channels and increased expression of aldosterone synthase, the rate-limiting enzyme for aldosterone biosynthesis. Contributes to chloride conductance in retinal pigment epithelium involved in phagocytosis of shed photoreceptor outer segments and photoreceptor renewal. Conducts chloride currents at the basolateral membrane of epithelial cells with a role in chloride reabsorption rather than secretion. Permeable to small monovalent anions with chloride &gt; thiocyanate &gt; bromide &gt; nitrate &gt; iodide ion selectivity. The protein is Chloride channel protein 2 (CLCN2) of Cavia porcellus (Guinea pig).